The following is a 444-amino-acid chain: Lycopaoctaene synthase (444 aa).

NADP(+) contacts are provided by Arg-48 and Arg-73. 3 residues coordinate Mg(2+): Asp-76, Glu-79, and Asp-80. Arg-215, Lys-315, and Arg-317 together coordinate NADP(+). 2 helical membrane passes run 391–411 and 415–435; these read TAMVLAGALLIAALAYFAYVY and GTSLKALPLFGVVIILAIGLF.

The protein belongs to the phytoene/squalene synthase family. Requires Mg(2+) as cofactor.

The protein resides in the membrane. The enzyme catalyses 2 (2E,6E)-farnesyl diphosphate + NADH + H(+) = squalene + 2 diphosphate + NAD(+). It carries out the reaction 2 (2E,6E)-farnesyl diphosphate + NADPH + H(+) = squalene + 2 diphosphate + NADP(+). The catalysed reaction is 2 (2E,6E,10E)-geranylgeranyl diphosphate + NADPH + H(+) = all-trans-lycopaoctaene + 2 diphosphate + NADP(+). Converts the C20 geranylgeranyl diphosphate (GGPP) to the C40 lycopaoctaene, the first committed intermediate in the production of lycopadiene. Converts farnesyl diphosphate (FPP) into squalene, a precursor for sterol biosynthesis in eukaryotes. Converts with low efficiency the C20 phytyl diphosphate (PPP) to the C40 lycopadiene in vitro. This reaction may not have biological significance in vivo. The sequence is that of Lycopaoctaene synthase from Botryococcus braunii (Green alga).